The sequence spans 246 residues: tRNA (guanine-N(1)-)-methyltransferase (246 aa).

S-adenosyl-L-methionine is bound by residues Gly-112 and 131–136 (IGDYVL).

This sequence belongs to the RNA methyltransferase TrmD family. Homodimer.

Its subcellular location is the cytoplasm. It catalyses the reaction guanosine(37) in tRNA + S-adenosyl-L-methionine = N(1)-methylguanosine(37) in tRNA + S-adenosyl-L-homocysteine + H(+). In terms of biological role, specifically methylates guanosine-37 in various tRNAs. The polypeptide is tRNA (guanine-N(1)-)-methyltransferase (Fervidobacterium nodosum (strain ATCC 35602 / DSM 5306 / Rt17-B1)).